A 441-amino-acid chain; its full sequence is Homoserine dehydrogenase (441 aa).

Residues asparagine 17 and valine 18 each contribute to the NADP(+) site. NAD(+) is bound by residues valine 18, valine 37, and glycine 47. Position 18 (valine 18) interacts with NADPH. Positions 49, 50, and 107 each coordinate NADP(+). Residue arginine 49 participates in NADPH binding. Position 107 (lysine 107) interacts with NADPH. Residues glutamate 131, valine 134, glycine 136, and isoleucine 138 each coordinate Na(+). The NADP(+) site is built by glycine 189 and glutamate 192. L-homoserine-binding residues include glutamate 192 and aspartate 203. The active-site Proton donor is the lysine 207. An NADP(+)-binding site is contributed by glycine 309. Residue glycine 309 coordinates NAD(+). Position 309 (glycine 309) interacts with NADPH. An ACT domain is found at 356–435 (YVSMNVADKP…VVQGVSSVIR (80 aa)).

Belongs to the homoserine dehydrogenase family. It depends on a metal cation as a cofactor.

The enzyme catalyses L-homoserine + NADP(+) = L-aspartate 4-semialdehyde + NADPH + H(+). It carries out the reaction L-homoserine + NAD(+) = L-aspartate 4-semialdehyde + NADH + H(+). Its pathway is amino-acid biosynthesis; L-methionine biosynthesis via de novo pathway; L-homoserine from L-aspartate: step 3/3. The protein operates within amino-acid biosynthesis; L-threonine biosynthesis; L-threonine from L-aspartate: step 3/5. Its function is as follows. Catalyzes the conversion of L-aspartate-beta-semialdehyde (L-Asa) to L-homoserine (L-Hse), the third step in the biosynthesis of threonine and methionine from aspartate. In Mycobacterium tuberculosis (strain CDC 1551 / Oshkosh), this protein is Homoserine dehydrogenase (hom).